The following is a 162-amino-acid chain: Phosphopantetheine adenylyltransferase (162 aa).

S11 contacts substrate. ATP contacts are provided by residues 11–12 (SF) and H19. Residues K43, V76, and R90 each coordinate substrate. Residues 91 to 93 (GLR), E101, and 126 to 132 (HLYISSS) contribute to the ATP site.

The protein belongs to the bacterial CoaD family. In terms of assembly, homohexamer. Mg(2+) serves as cofactor.

Its subcellular location is the cytoplasm. The catalysed reaction is (R)-4'-phosphopantetheine + ATP + H(+) = 3'-dephospho-CoA + diphosphate. It functions in the pathway cofactor biosynthesis; coenzyme A biosynthesis; CoA from (R)-pantothenate: step 4/5. With respect to regulation, is inhibited by a series of cycloalkyl pyrimidines, which also show suppression of bacterial growth. Reversibly transfers an adenylyl group from ATP to 4'-phosphopantetheine, yielding dephospho-CoA (dPCoA) and pyrophosphate. The sequence is that of Phosphopantetheine adenylyltransferase from Streptococcus pneumoniae (strain ATCC BAA-255 / R6).